The primary structure comprises 273 residues: Rhamnulose-1-phosphate aldolase (273 aa).

Residue Glu117 is part of the active site. Residues His140, His142, and His211 each coordinate Zn(2+).

The protein belongs to the aldolase class II family. RhaD subfamily. The cofactor is Zn(2+).

It is found in the cytoplasm. It carries out the reaction L-rhamnulose 1-phosphate = (S)-lactaldehyde + dihydroxyacetone phosphate. It functions in the pathway carbohydrate degradation; L-rhamnose degradation; glycerone phosphate from L-rhamnose: step 3/3. Its function is as follows. Catalyzes the reversible cleavage of L-rhamnulose-1-phosphate to dihydroxyacetone phosphate (DHAP) and L-lactaldehyde. The sequence is that of Rhamnulose-1-phosphate aldolase from Listeria monocytogenes serovar 1/2a (strain ATCC BAA-679 / EGD-e).